We begin with the raw amino-acid sequence, 378 residues long: Mannitol-1-phosphate 5-dehydrogenase (378 aa).

4–15 (SVHFGAGNIGRG) is an NAD(+) binding site.

The protein belongs to the mannitol dehydrogenase family.

The catalysed reaction is D-mannitol 1-phosphate + NAD(+) = beta-D-fructose 6-phosphate + NADH + H(+). In Streptococcus pneumoniae (strain ATCC 700669 / Spain 23F-1), this protein is Mannitol-1-phosphate 5-dehydrogenase.